A 193-amino-acid polypeptide reads, in one-letter code: Large ribosomal subunit protein uL18 (193 aa).

The protein belongs to the universal ribosomal protein uL18 family. As to quaternary structure, part of the 50S ribosomal subunit. Contacts the 5S and 23S rRNAs.

In terms of biological role, this is one of the proteins that bind and probably mediate the attachment of the 5S RNA into the large ribosomal subunit, where it forms part of the central protuberance. The polypeptide is Large ribosomal subunit protein uL18 (Methanococcus maripaludis (strain C6 / ATCC BAA-1332)).